A 76-amino-acid chain; its full sequence is Exodeoxyribonuclease 7 small subunit (76 aa).

Belongs to the XseB family. Heterooligomer composed of large and small subunits.

It localises to the cytoplasm. The catalysed reaction is Exonucleolytic cleavage in either 5'- to 3'- or 3'- to 5'-direction to yield nucleoside 5'-phosphates.. Functionally, bidirectionally degrades single-stranded DNA into large acid-insoluble oligonucleotides, which are then degraded further into small acid-soluble oligonucleotides. This Gluconacetobacter diazotrophicus (strain ATCC 49037 / DSM 5601 / CCUG 37298 / CIP 103539 / LMG 7603 / PAl5) protein is Exodeoxyribonuclease 7 small subunit.